A 770-amino-acid chain; its full sequence is Glutamate carboxypeptidase 2 homolog (770 aa).

Over 1-25 (MPYVGVGAQTVSTSLTGAPMVKAYI) the chain is Cytoplasmic. Residues 26–42 (AIAASLIFVFCIAALGV) traverse the membrane as a helical; Signal-anchor for type II membrane protein segment. The Extracellular segment spans residues 43–770 (HHSERKFNKF…CVVNTLRDVI (728 aa)). Residues N175 and N337 are each glycosylated (N-linked (GlcNAc...) asparagine). The interval 282-597 (SKKELFKGRT…QYWAELAKTF (316 aa)) is catalytic. 2 residues coordinate Zn(2+): H387 and D397. N417 is a glycosylation site (N-linked (GlcNAc...) asparagine). The active-site Nucleophile is the E435. Zn(2+)-binding residues include E436 and D464. Residues N469, N546, and N551 are each glycosylated (N-linked (GlcNAc...) asparagine). H562 is a binding site for Zn(2+). Residues N579, N606, and N630 are each glycosylated (N-linked (GlcNAc...) asparagine).

It belongs to the peptidase M28 family. M28B subfamily. The cofactor is Zn(2+).

It localises to the membrane. It carries out the reaction Release of an unsubstituted, C-terminal glutamyl residue, typically from Ac-Asp-Glu or folylpoly-gamma-glutamates.. The chain is Glutamate carboxypeptidase 2 homolog from Caenorhabditis elegans.